The sequence spans 316 residues: Ornithine carbamoyltransferase (316 aa).

Carbamoyl phosphate contacts are provided by residues 59–62, Q86, R110, and 137–140; these read STRT and HPCQ. Residues N168, D232, and 236-237 contribute to the L-ornithine site; that span reads SM. Residues 273–274 and R301 each bind carbamoyl phosphate; that span reads CL.

It belongs to the aspartate/ornithine carbamoyltransferase superfamily. OTCase family.

It localises to the cytoplasm. It carries out the reaction carbamoyl phosphate + L-ornithine = L-citrulline + phosphate + H(+). It participates in amino-acid biosynthesis; L-arginine biosynthesis; L-arginine from L-ornithine and carbamoyl phosphate: step 1/3. Functionally, reversibly catalyzes the transfer of the carbamoyl group from carbamoyl phosphate (CP) to the N(epsilon) atom of ornithine (ORN) to produce L-citrulline. This Listeria monocytogenes serotype 4b (strain F2365) protein is Ornithine carbamoyltransferase.